The chain runs to 513 residues: Chromosomal replication initiator protein DnaA (513 aa).

A domain I, interacts with DnaA modulators region spans residues 1-87 (MSVELWQQCV…IGSKRSSAPR (87 aa)). The segment at 87–176 (RAAPNAPLAA…QVEGALKHTS (90 aa)) is domain II. Residues 113-163 (AAPAPAPAPTSAPAKKAAAQKAAEVSEEPSRDSFDPMAGASSQQAPVRAEQ) form a disordered region. Over residues 123–135 (SAPAKKAAAQKAA) the composition is skewed to low complexity. The tract at residues 177-393 (YLNRTFTFEN…GALKRVIAHS (217 aa)) is domain III, AAA+ region. ATP-binding residues include G221, G223, K224, and T225. Residues 394 to 513 (HFMGRDITIE…YKNLLRTLTT (120 aa)) form a domain IV, binds dsDNA region.

Belongs to the DnaA family. In terms of assembly, oligomerizes as a right-handed, spiral filament on DNA at oriC.

The protein localises to the cytoplasm. In terms of biological role, plays an essential role in the initiation and regulation of chromosomal replication. ATP-DnaA binds to the origin of replication (oriC) to initiate formation of the DNA replication initiation complex once per cell cycle. Binds the DnaA box (a 9 base pair repeat at the origin) and separates the double-stranded (ds)DNA. Forms a right-handed helical filament on oriC DNA; dsDNA binds to the exterior of the filament while single-stranded (ss)DNA is stabiized in the filament's interior. The ATP-DnaA-oriC complex binds and stabilizes one strand of the AT-rich DNA unwinding element (DUE), permitting loading of DNA polymerase. After initiation quickly degrades to an ADP-DnaA complex that is not apt for DNA replication. Binds acidic phospholipids. This chain is Chromosomal replication initiator protein DnaA, found in Pseudomonas fluorescens (strain ATCC BAA-477 / NRRL B-23932 / Pf-5).